Reading from the N-terminus, the 551-residue chain is Structure-specific endonuclease subunit MUS81 (551 aa).

Disordered regions lie at residues H84–W131 and F229–P259. Over residues A92–P107 the composition is skewed to low complexity. S95 is subject to Phosphoserine. The span at V110 to W131 shows a compositional bias: polar residues. Residues G124–A244 are interaction with BLM. The tract at residues W131 to R230 is winged helix domain (WHD); critical for endonuclease activity. A compositionally biased stretch (basic and acidic residues) spans F229 to D238. Residues L270 to G372 form the ERCC4 domain. Active-site residues include D274, E277, and D307. Mg(2+)-binding residues include D274, E277, D307, E333, and R334. Residues V471 to C545 are helix-hairpin-helix (2HhH); involved in DNA recognition and bending.

The protein belongs to the XPF family. As to quaternary structure, part of the heterodimeric DNA structure-specific endonuclease complex MUS81-EME1. Part of the heterodimeric DNA structure-specific endonuclease complex MUS81-EME2. Interacts with BLM; may stimulate the endonuclease activity of MUS81. Interacts with SLX4/BTBD12; this interaction is direct and links the MUS81-EME1 complex to SLX4, which may coordinate the action of the structure-specific endonuclease during DNA repair. Interacts with DCLRE1B/Apollo. Interacts with RECQL5; this interaction stimulates mitotic DNA synthesis. Interacts with CHEK2. Mg(2+) is required as a cofactor. Expressed highly in testis. Expressed also in bone marrow, brain, thymus and to a lesser extent in heart and skeletal muscle, colon, kidney and spleen.

It is found in the nucleus. The protein resides in the nucleolus. Catalytic subunit of two functionally distinct, structure-specific, heterodimeric DNA endonucleases MUS81-EME1 and MUS81-EME2 that are involved in the maintenance of genome stability. Both endonucleases have essentially the same substrate specificity though MUS81-EME2 is more active than its MUS81-EME1 counterpart. Both cleave 3'-flaps and nicked Holliday junctions, and exhibit limited endonuclease activity with 5' flaps and nicked double-stranded DNAs. MUS81-EME2 which is active during the replication of DNA is more specifically involved in replication fork processing. Replication forks frequently encounter obstacles to their passage, including DNA base lesions, DNA interstrand cross-links, difficult-to-replicate sequences, transcription bubbles, or tightly bound proteins. One mechanism for the restart of a stalled replication fork involves nucleolytic cleavage mediated by the MUS81-EME2 endonuclease. By acting upon the stalled fork, MUS81-EME2 generates a DNA double-strand break (DSB) that can be repaired by homologous recombination, leading to the restoration of an active fork. MUS81-EME2 could also function in telomere maintenance. MUS81-EME1, on the other hand, is active later in the cell cycle and functions in the resolution of mitotic recombination intermediates including the Holliday junctions, the four-way DNA intermediates that form during homologous recombination. The polypeptide is Structure-specific endonuclease subunit MUS81 (Mus musculus (Mouse)).